The following is a 207-amino-acid chain: Ribosomal RNA small subunit methyltransferase G (207 aa).

S-adenosyl-L-methionine contacts are provided by residues Gly74, Leu79, 125–126 (VE), and Arg140.

This sequence belongs to the methyltransferase superfamily. RNA methyltransferase RsmG family.

Its subcellular location is the cytoplasm. It carries out the reaction guanosine(527) in 16S rRNA + S-adenosyl-L-methionine = N(7)-methylguanosine(527) in 16S rRNA + S-adenosyl-L-homocysteine. Functionally, specifically methylates the N7 position of guanine in position 527 of 16S rRNA. This Shewanella piezotolerans (strain WP3 / JCM 13877) protein is Ribosomal RNA small subunit methyltransferase G.